The following is a 2013-amino-acid chain: Centrosomal protein 224 (2013 aa).

HEAT repeat units lie at residues 115–153 (TIEA…ALKT), 158–196 (QIPV…WIGK), 200–238 (PLIS…EAAK), 348–386 (TSYV…KSIS), and 427–465 (TKVT…IIGE). The disordered stretch occupies residues 512 to 557 (PVSSSNKKPAAATGNSKSSSTTTPTGRSSNSSPLPPPPSSSDDIKN). A compositionally biased stretch (low complexity) spans 524 to 543 (TGNSKSSSTTTPTGRSSNSS). 5 HEAT repeats span residues 724 to 762 (IQQL…NIGA), 816 to 854 (VDIS…DANR), 857 to 895 (QPKL…AMGG), 899 to 937 (EKHA…SDLG), and 977 to 1015 (PSEI…QIPL). Residues 1043-1109 (KTGQPIPPPS…QQQQRRSILQ (67 aa)) are disordered. A compositionally biased stretch (low complexity) spans 1053–1106 (KTKQSTSSSSSSSSTTSQQSSTPSSPQPIRQQQQQQQQQPTQPQQQQQQQQRRS). HEAT repeat units follow at residues 1240-1279 (EYEA…LCLP), 1281-1314 (VLFR…KNGA), and 1317-1353 (CGNL…HIKD). 3 stretches are compositionally biased toward low complexity: residues 1372–1406 (NNNN…QQQQ), 1695–1735 (NRIS…INSS), and 1746–1796 (SNNT…TLST). Disordered stretches follow at residues 1372 to 1413 (NNNN…SLST), 1695 to 1809 (NRIS…YSGK), 1905 to 1949 (NQPS…IAPQ), and 1966 to 1995 (TLNP…DLNS). Over residues 1799 to 1809 (INKEPRDYSGK) the composition is skewed to basic and acidic residues. Low complexity predominate over residues 1913-1939 (NNNNNNNNNNNNNNNNNINNNNNNNNN). The span at 1940–1949 (SGGNENIAPQ) shows a compositional bias: polar residues. A compositionally biased stretch (low complexity) spans 1967–1995 (LNPDQNSGSNNNNSHQNSPSTSSSNDLNS).

This sequence belongs to the TOG/XMAP215 family. As to quaternary structure, interacts with eb1 at the microtubule tip, centrosome and kinetochore. Interacts with lis1 in the cortical attachment of microtubules.

It localises to the cytoplasm. Its subcellular location is the cytoskeleton. The protein resides in the microtubule organizing center. It is found in the centrosome. The protein localises to the chromosome. It localises to the centromere. Its subcellular location is the kinetochore. Involved in regulation of microtubule dynamics. Regulates the interaction of microtubules tips with the centrosome and cell cortex. The polypeptide is Centrosomal protein 224 (mtaA) (Dictyostelium discoideum (Social amoeba)).